The primary structure comprises 343 residues: Vancomycin C-type resistance protein VanC1 (343 aa).

The region spanning 134–336 (HQLADTMGIA…YEILVEQLIA (203 aa)) is the ATP-grasp domain. 164 to 219 (IQDHGFPIFIKPNEAGSSKGITKVTDKTALQSALTTAFAYGSTVLIQKAIAGIEIG) contributes to the ATP binding site. Aspartate 290, glutamate 303, and asparagine 305 together coordinate Mg(2+). Positions 290, 303, and 305 each coordinate Mn(2+).

It belongs to the D-alanine--D-alanine ligase family. Mg(2+) is required as a cofactor. It depends on Mn(2+) as a cofactor.

The protein localises to the cell membrane. The catalysed reaction is D-serine + D-alanine + ATP = D-alanyl-D-serine + ADP + phosphate + H(+). D-alanine--D-alanine ligase of altered specificity, which catalyzes synthesis of D-Ala-D-Ser; produces a peptidoglycan which does not terminate in D-alanine but in D-serine, thus probably reducing affinity for vancomycin. Together with VanT and VanXYC, required for vancomycin resistance in E.gallinarum strain BM4174. This chain is Vancomycin C-type resistance protein VanC1, found in Enterococcus gallinarum.